We begin with the raw amino-acid sequence, 325 residues long: Lactonase drp35 (325 aa).

10 residues coordinate Ca(2+): glutamate 46, serine 108, glycine 110, glutamate 128, threonine 131, tyrosine 133, aspartate 136, asparagine 183, aspartate 234, and serine 235. The active-site Proton donor is the aspartate 234.

Belongs to the SMP-30/CGR1 family. It depends on Ca(2+) as a cofactor.

It is found in the cytoplasm. In terms of biological role, exhibits lactonase activity. Acts in cells with perturbed membrane integrity and is possibly related to the membrane homeostasis. The polypeptide is Lactonase drp35 (drp35) (Staphylococcus haemolyticus (strain JCSC1435)).